Reading from the N-terminus, the 431-residue chain is Serine hydroxymethyltransferase 2 (431 aa).

Residues Leu131 and 135–137 (GHL) each bind (6S)-5,6,7,8-tetrahydrofolate. The residue at position 240 (Lys240) is an N6-(pyridoxal phosphate)lysine. Residue Glu256 coordinates (6S)-5,6,7,8-tetrahydrofolate.

Belongs to the SHMT family. As to quaternary structure, homodimer. Pyridoxal 5'-phosphate serves as cofactor.

The protein resides in the cytoplasm. The catalysed reaction is (6R)-5,10-methylene-5,6,7,8-tetrahydrofolate + glycine + H2O = (6S)-5,6,7,8-tetrahydrofolate + L-serine. Its pathway is one-carbon metabolism; tetrahydrofolate interconversion. The protein operates within amino-acid biosynthesis; glycine biosynthesis; glycine from L-serine: step 1/1. Catalyzes the reversible interconversion of serine and glycine with tetrahydrofolate (THF) serving as the one-carbon carrier. This reaction serves as the major source of one-carbon groups required for the biosynthesis of purines, thymidylate, methionine, and other important biomolecules. Also exhibits THF-independent aldolase activity toward beta-hydroxyamino acids, producing glycine and aldehydes, via a retro-aldol mechanism. The protein is Serine hydroxymethyltransferase 2 of Vibrio vulnificus (strain CMCP6).